Here is a 348-residue protein sequence, read N- to C-terminus: Phosphoribosylformylglycinamidine cyclo-ligase (348 aa).

This sequence belongs to the AIR synthase family.

Its subcellular location is the cytoplasm. It catalyses the reaction 2-formamido-N(1)-(5-O-phospho-beta-D-ribosyl)acetamidine + ATP = 5-amino-1-(5-phospho-beta-D-ribosyl)imidazole + ADP + phosphate + H(+). It functions in the pathway purine metabolism; IMP biosynthesis via de novo pathway; 5-amino-1-(5-phospho-D-ribosyl)imidazole from N(2)-formyl-N(1)-(5-phospho-D-ribosyl)glycinamide: step 2/2. The chain is Phosphoribosylformylglycinamidine cyclo-ligase from Cereibacter sphaeroides (strain ATCC 17029 / ATH 2.4.9) (Rhodobacter sphaeroides).